The following is a 221-amino-acid chain: MKKEKAIVVFSGGQDSTTCLFWALKQFDEVEAVTFDYGQRHRLEIEVAASIAKELGVPHTVLDMSLLNQLAPNALTRSDIAIEQNEGQLPSTFVDGRNLLFLSFAAVLAKQKGARHLVTGVCETDFSGYPDCRDIFIKSLNVTLNLAMDYQFVIHTPLMWLTKAKTWKLADELGAFDFVRTKTLTCYNGIIADGCGECPACVLRRRGLEEYMKEKEGANQL.

An ATP-binding site is contributed by 10-20; the sequence is FSGGQDSTTCL. Residues C186, C195, C198, and C201 each coordinate Zn(2+).

It belongs to the QueC family. Homodimer. It depends on Zn(2+) as a cofactor.

The catalysed reaction is 7-carboxy-7-deazaguanine + NH4(+) + ATP = 7-cyano-7-deazaguanine + ADP + phosphate + H2O + H(+). It functions in the pathway purine metabolism; 7-cyano-7-deazaguanine biosynthesis. Functionally, catalyzes the ATP-dependent conversion of 7-carboxy-7-deazaguanine (CDG) to 7-cyano-7-deazaguanine (preQ(0)). The sequence is that of 7-cyano-7-deazaguanine synthase from Geobacillus sp. (strain WCH70).